A 470-amino-acid chain; its full sequence is Protein naked cuticle homolog 1 (470 aa).

Disordered regions lie at residues 1–21 (MGKL…PEGD) and 90–114 (PPEK…PCPG). Residue Gly2 is the site of N-myristoyl glycine attachment. Over residues 92–109 (EKTDGLGSGDEKKMERVS) the composition is skewed to basic and acidic residues. Residues 125–190 (QCDVSMEEDS…LRVKLTVAPD (66 aa)) are interaction with DVL1, DVL2 and DVL3. One can recognise an EF-hand domain in the interval 131-166 (EEDSRQEWTFTLYDFDNNGKVTREDITSLLHTIYEV). Ca(2+)-binding residues include Asp144, Asp146, Asn148, Lys150, and Asp155. The span at 192–205 (SQSKRSVLVNQADL) shows a compositional bias: polar residues. 4 disordered regions span residues 192 to 228 (SQSK…KKQR), 271 to 314 (QFGP…QGVD), 337 to 357 (GTQD…KSVG), and 446 to 470 (GQPV…FYQT). Residues 210-227 (PRAETKPTEDLRSWEKKQ) are compositionally biased toward basic and acidic residues. Polar residues predominate over residues 271–281 (QFGPGSPSVAQ). Basic residues predominate over residues 452 to 470 (HEHHHHHEHHHHYHHFYQT).

The protein belongs to the NKD family. As to quaternary structure, interacts with DVL1, DVL2, DVL3 and PPP2R3A. Expressed in colon, heart, kidney, leukocyte, liver, lung, ovary, pancreas, placenta, prostate, skeletal muscle, small intestine and spleen.

Its subcellular location is the cell membrane. It is found in the cytoplasm. Its function is as follows. Cell autonomous antagonist of the canonical Wnt signaling pathway. May activate a second Wnt signaling pathway that controls planar cell polarity. The protein is Protein naked cuticle homolog 1 (NKD1) of Homo sapiens (Human).